A 204-amino-acid polypeptide reads, in one-letter code: MAYTIEEEQELTAIKAWWNENYKFIIVCFVIAFGGVFGWNYWQSHQIQKMHKASAEYEQALFNYQKDPKAQAEQFNQFIKNNEKTSYAVLALLDKAKIAVENKDFPLAEDALKQAMAQSNDDILSSVSALRLASVQFQLGQLDPALESLKSVKEQAWNSAKNLLAGDIQLAKGDKETAKKSYQQAQENAGALEQQLIQVRLNNL.

Residues 1 to 23 (MAYTIEEEQELTAIKAWWNENYK) are Cytoplasmic-facing. A helical transmembrane segment spans residues 24-44 (FIIVCFVIAFGGVFGWNYWQS). The Periplasmic segment spans residues 45-204 (HQIQKMHKAS…QLIQVRLNNL (160 aa)).

This sequence belongs to the YfgM family. Interacts with the SecYEG translocon. Forms a complex with PpiD.

The protein localises to the cell inner membrane. Functionally, may mediate protein transfer from the SecYEG translocon to the periplasmic chaperone network via its periplasmic C-terminal region. The chain is Ancillary SecYEG translocon subunit (1057) from Aggregatibacter actinomycetemcomitans (Actinobacillus actinomycetemcomitans).